Reading from the N-terminus, the 534-residue chain is Arginine transporter 1 (534 aa).

Transmembrane regions (helical) follow at residues 35-55, 99-119, 126-146, 154-174, 182-202, and 216-236; these read YVLL…YFGW, SLFT…GYLL, AVAL…AFSG, PAFV…LLIV, ALIM…PLVL, and VCIG…FFFI. An N-linked (GlcNAc...) asparagine glycan is attached at Asn246. The disordered stretch occupies residues 261–302; that stretch reads TAQSSPKAVDSPPCDEGASSRGRLAVSHNTERTAPDDEQEKD. Positions 289–302 are enriched in basic and acidic residues; it reads NTERTAPDDEQEKD. A run of 6 helical transmembrane segments spans residues 329 to 349, 365 to 385, 388 to 408, 419 to 439, 451 to 471, and 483 to 503; these read AFTF…WVMA, YTLE…GVVI, IGIM…YVCV, FSVI…YVFV, LIGV…VLYG, and RPVV…LLAM.

The protein belongs to the SLC43A transporter (TC 2.A.1.44) family.

It is found in the cell membrane. It catalyses the reaction L-arginine(in) = L-arginine(out). Its function is as follows. Selective L-arginine transporter that is essential for parasite survival and virulence. Does not require other inorganic ions such as sodium, chloride, potassium or calcium. The chain is Arginine transporter 1 from Toxoplasma gondii (strain ATCC 50611 / Me49).